The following is a 176-amino-acid chain: RNA 2',3'-cyclic phosphodiesterase (176 aa).

Histidine 39 serves as the catalytic Proton donor. 2 consecutive short sequence motifs (HXTX) follow at residues 39–42 (HITL) and 122–125 (HLTV). Catalysis depends on histidine 122, which acts as the Proton acceptor.

It belongs to the 2H phosphoesterase superfamily. ThpR family.

It carries out the reaction a 3'-end 2',3'-cyclophospho-ribonucleotide-RNA + H2O = a 3'-end 2'-phospho-ribonucleotide-RNA + H(+). Its function is as follows. Hydrolyzes RNA 2',3'-cyclic phosphodiester to an RNA 2'-phosphomonoester. This is RNA 2',3'-cyclic phosphodiesterase from Archaeoglobus fulgidus (strain ATCC 49558 / DSM 4304 / JCM 9628 / NBRC 100126 / VC-16).